A 430-amino-acid chain; its full sequence is Carbamoyl phosphate synthase arginine-specific small chain (430 aa).

The N-terminal 9 residues, 1–9, are a transit peptide targeting the mitochondrion; sequence MLSATKRYL. The region spanning 219–407 is the Glutamine amidotransferase type-1 domain; sequence HIAVLDCGAK…FDNINVYKKS (189 aa). Residue C296 is the Nucleophile of the active site. Residues H380 and E382 contribute to the active site.

Belongs to the CarA family. As to quaternary structure, heterodimer composed of 2 chains; the small (or glutamine) chain promotes the hydrolysis of glutamine to ammonia, which is used by the large (or ammonia) chain to synthesize carbamoyl phosphate.

It is found in the mitochondrion matrix. The enzyme catalyses hydrogencarbonate + L-glutamine + 2 ATP + H2O = carbamoyl phosphate + L-glutamate + 2 ADP + phosphate + 2 H(+). It carries out the reaction L-glutamine + H2O = L-glutamate + NH4(+). It participates in amino-acid biosynthesis; L-arginine biosynthesis; carbamoyl phosphate from bicarbonate: step 1/1. In terms of biological role, small subunit of the arginine-specific carbamoyl phosphate synthase (CPSase). CPSase catalyzes the formation of carbamoyl phosphate from the ammonia moiety of glutamine, carbonate, and phosphate donated by ATP, the first step of the arginine biosynthetic pathway. The small subunit (glutamine amidotransferase) binds and cleaves glutamine to supply the large subunit with the substrate ammonia. In Candida albicans (strain SC5314 / ATCC MYA-2876) (Yeast), this protein is Carbamoyl phosphate synthase arginine-specific small chain (CPA1).